A 101-amino-acid polypeptide reads, in one-letter code: Urease subunit beta (101 aa).

The protein belongs to the urease beta subunit family. As to quaternary structure, heterotrimer of UreA (gamma), UreB (beta) and UreC (alpha) subunits. Three heterotrimers associate to form the active enzyme.

Its subcellular location is the cytoplasm. It carries out the reaction urea + 2 H2O + H(+) = hydrogencarbonate + 2 NH4(+). The protein operates within nitrogen metabolism; urea degradation; CO(2) and NH(3) from urea (urease route): step 1/1. The chain is Urease subunit beta from Dechloromonas aromatica (strain RCB).